A 240-amino-acid polypeptide reads, in one-letter code: Methylthioribulose-1-phosphate dehydratase (240 aa).

The segment covering 1 to 17 (MAQEVENNNNDHLVQSS) has biased composition (polar residues). Residues 1–20 (MAQEVENNNNDHLVQSSDPE) form a disordered region. Cys-100 is a binding site for substrate. Zn(2+) contacts are provided by His-117 and His-119. Glu-146 functions as the Proton donor/acceptor in the catalytic mechanism. His-202 lines the Zn(2+) pocket.

The protein belongs to the aldolase class II family. MtnB subfamily. Zn(2+) is required as a cofactor.

The protein localises to the cytoplasm. It catalyses the reaction 5-(methylsulfanyl)-D-ribulose 1-phosphate = 5-methylsulfanyl-2,3-dioxopentyl phosphate + H2O. Its pathway is amino-acid biosynthesis; L-methionine biosynthesis via salvage pathway; L-methionine from S-methyl-5-thio-alpha-D-ribose 1-phosphate: step 2/6. In terms of biological role, catalyzes the dehydration of methylthioribulose-1-phosphate (MTRu-1-P) into 2,3-diketo-5-methylthiopentyl-1-phosphate (DK-MTP-1-P). The polypeptide is Methylthioribulose-1-phosphate dehydratase (Neosartorya fischeri (strain ATCC 1020 / DSM 3700 / CBS 544.65 / FGSC A1164 / JCM 1740 / NRRL 181 / WB 181) (Aspergillus fischerianus)).